A 200-amino-acid polypeptide reads, in one-letter code: Claudin-11 (200 aa).

Met-1 is a topological domain (cytoplasmic). The helical transmembrane segment at 2 to 22 threads the bilayer; that stretch reads VATCLQVVGFVTSFVGWIGVI. Residues 23-75 lie on the Extracellular side of the membrane; that stretch reads VTTSTNDWVVTCGYTIPTCRKLDELGSKGLWADCVMATGLYHCKPLVDILPCR. The chain crosses the membrane as a helical span at residues 76-96; that stretch reads ALMIAASVLGLPAILLLLTVL. Residues 97-115 lie on the Cytoplasmic side of the membrane; the sequence is PCIRMGQEPGVAKYRRAQL. The helical transmembrane segment at 116–136 threads the bilayer; sequence AGVLLILLALCAIVATIWFPV. The Extracellular segment spans residues 137–150; it reads CAHRETTIVSFGYS. The helical transmembrane segment at 151 to 171 threads the bilayer; that stretch reads LYAGWIGAVLCLVGGCVILCC. Residues 172 to 200 are Cytoplasmic-facing; sequence AGDAQAFGENRFYYTAGSSSPTHAKSAHV. 2 positions are modified to phosphoserine: Ser-190 and Ser-191.

It belongs to the claudin family. In terms of assembly, interacts with tetraspanin-3/TSPAN3. Interacts with OCLN.

The protein resides in the cell junction. It localises to the tight junction. It is found in the cell membrane. Its function is as follows. Plays a major role in tight junction-specific obliteration of the intercellular space, through calcium-independent cell-adhesion activity. The sequence is that of Claudin-11 (CLDN11) from Pongo abelii (Sumatran orangutan).